The sequence spans 174 residues: Shikimate kinase (174 aa).

15-20 is an ATP binding site; that stretch reads GTGKST. Residue Ser19 coordinates Mg(2+). Residues Asp37, Arg61, and Gly82 each contribute to the substrate site. Arg120 serves as a coordination point for ATP. Arg138 is a binding site for substrate.

The protein belongs to the shikimate kinase family. As to quaternary structure, monomer. Requires Mg(2+) as cofactor.

It is found in the cytoplasm. The catalysed reaction is shikimate + ATP = 3-phosphoshikimate + ADP + H(+). Its pathway is metabolic intermediate biosynthesis; chorismate biosynthesis; chorismate from D-erythrose 4-phosphate and phosphoenolpyruvate: step 5/7. In terms of biological role, catalyzes the specific phosphorylation of the 3-hydroxyl group of shikimic acid using ATP as a cosubstrate. This Staphylococcus aureus (strain NCTC 8325 / PS 47) protein is Shikimate kinase.